The following is a 106-amino-acid chain: MSNKNKKSGGAGNGAAQKQTRQQSHDSQDYSSFKIVLFYCMLIVFLPVVTFFLLKGFVLDRFFSLSEVKVNIASAVGAVVSLHIALGLYIYRAYFGATGSKAVKED.

The segment at 1–26 (MSNKNKKSGGAGNGAAQKQTRQQSHD) is disordered. The Cytoplasmic portion of the chain corresponds to 1–32 (MSNKNKKSGGAGNGAAQKQTRQQSHDSQDYSS). Residues 33–53 (FKIVLFYCMLIVFLPVVTFFL) form a helical membrane-spanning segment. At 54-69 (LKGFVLDRFFSLSEVK) the chain is on the lumenal side. Residues 70 to 90 (VNIASAVGAVVSLHIALGLYI) form a helical membrane-spanning segment. At 91 to 106 (YRAYFGATGSKAVKED) the chain is on the cytoplasmic side.

This sequence belongs to the VMA21 family.

The protein resides in the endoplasmic reticulum membrane. Its subcellular location is the endoplasmic reticulum-Golgi intermediate compartment membrane. The protein localises to the cytoplasmic vesicle. It is found in the COPII-coated vesicle membrane. Functionally, required for the assembly of the V0 complex of the vacuolar ATPase (V-ATPase) in the endoplasmic reticulum. This Drosophila ananassae (Fruit fly) protein is Vacuolar ATPase assembly integral membrane protein VMA21 homolog.